We begin with the raw amino-acid sequence, 594 residues long: Putative diflavin flavoprotein A 4 (594 aa).

The zinc metallo-hydrolase stretch occupies residues 57 to 250 (RRGTTSNSYL…LTLKMIAPGH (194 aa)). In terms of domain architecture, Flavodoxin-like spans 279–417 (VALIYASAYG…VCTTSGANFA (139 aa)). A flavodoxin-reductase-like region spans residues 445–594 (VGRIIGSIGV…IRHRKSGGQY (150 aa)).

The protein in the N-terminal section; belongs to the zinc metallo-hydrolase group 3 family. It in the C-terminal section; belongs to the flavodoxin reductase family. Fe cation serves as cofactor.

Functionally, mediates electron transfer from NADH to oxygen, reducing it to water. This modular protein has 3 redox cofactors, in other organisms the same activity requires 2 or 3 proteins. This chain is Putative diflavin flavoprotein A 4 (dfa4), found in Synechocystis sp. (strain ATCC 27184 / PCC 6803 / Kazusa).